Consider the following 151-residue polypeptide: UPF0178 protein CPS_3584 (151 aa).

It belongs to the UPF0178 family.

This Colwellia psychrerythraea (strain 34H / ATCC BAA-681) (Vibrio psychroerythus) protein is UPF0178 protein CPS_3584.